The following is a 142-amino-acid chain: Galactose-6-phosphate isomerase subunit LacA (142 aa).

Belongs to the LacAB/RpiB family. In terms of assembly, heteromultimeric protein consisting of LacA and LacB.

It catalyses the reaction aldehydo-D-galactose 6-phosphate = keto-D-tagatose 6-phosphate. It participates in carbohydrate metabolism; D-galactose 6-phosphate degradation; D-tagatose 6-phosphate from D-galactose 6-phosphate: step 1/1. The sequence is that of Galactose-6-phosphate isomerase subunit LacA from Clostridium acetobutylicum (strain ATCC 824 / DSM 792 / JCM 1419 / IAM 19013 / LMG 5710 / NBRC 13948 / NRRL B-527 / VKM B-1787 / 2291 / W).